Reading from the N-terminus, the 1066-residue chain is Phosphatidylinositol 4-kinase PIK1 (1066 aa).

The region spanning 1-133 is the PIK helical domain; that stretch reads MHKASSSKKS…GFQVARRVLN (133 aa). 2 positions are modified to phosphoserine: S10 and S236. Disordered stretches follow at residues 218-240, 303-411, and 564-624; these read KKTS…PIDL, DGKN…KKAN, and NENR…LGDM. The span at 342-356 shows a compositional bias: acidic residues; the sequence is NNEDETGGETEEDAD. Polar residues-rich tracts occupy residues 374-411 and 570-597; these read QPRT…KKAN and STLT…NEGL. S384 is modified (phosphoserine). T394 carries the post-translational modification Phosphothreonine. A phosphoserine mark is found at S396 and S592. The segment covering 598–609 has biased composition (low complexity); that stretch reads SSTSRSDSASTA. One can recognise a PI3K/PI4K catalytic domain in the interval 770–1049; that stretch reads ATKKERIRKT…FLIGKSLGSI (280 aa). Residues 776 to 782 are G-loop; that stretch reads IRKTSEY. The interval 915–923 is catalytic loop; it reads QVKDRHNGN. An activation loop region spans residues 934-958; the sequence is HIDFGFMLSNSPGSVGFEAAPFKLT.

Belongs to the PI3/PI4-kinase family. Type III PI4K subfamily. Interacts with FRQ1.

Its subcellular location is the nucleus. It is found in the golgi apparatus. The protein resides in the trans-Golgi network. It carries out the reaction a 1,2-diacyl-sn-glycero-3-phospho-(1D-myo-inositol) + ATP = a 1,2-diacyl-sn-glycero-3-phospho-(1D-myo-inositol 4-phosphate) + ADP + H(+). Its function is as follows. Acts on phosphatidylinositol (PI) in the first committed step in the production of the second messenger inositol 1,4,5,-trisphosphate. PIK1 is part of a nuclear phosphoinositide cycle and could control cytokinesis through the actin cytoskeleton. Involved in the response to mating pheromone. The polypeptide is Phosphatidylinositol 4-kinase PIK1 (Saccharomyces cerevisiae (strain ATCC 204508 / S288c) (Baker's yeast)).